The chain runs to 426 residues: Growth-regulating factor 9 (426 aa).

A QLQ domain is found at 92 to 127 (PFTPSQWMELEHQALIYKYLNAKAPIPSSLLISISK). Positions 151–195 (DPEPGRCRRTDGKKWRCSKEAMADHKYCERHINRNRHRSRKPVEN) constitute a WRC domain. 2 short sequence motifs (bipartite nuclear localization signal) span residues 156–166 (RCRRTDGKKWR) and 184–191 (RNRHRSRK). The tract at residues 184–222 (RNRHRSRKPVENQSRKTVKETPCAGSLPSSVGQGSFKKA) is disordered. Over residues 191–202 (KPVENQSRKTVK) the composition is skewed to basic and acidic residues.

This sequence belongs to the GRF family.

The protein localises to the nucleus. Functionally, transcription activator that plays a regulatory role in gibberellin-induced stem elongation. The sequence is that of Growth-regulating factor 9 (GRF9) from Oryza sativa subsp. japonica (Rice).